We begin with the raw amino-acid sequence, 122 residues long: Large ribosomal subunit protein bL12 (122 aa).

The protein belongs to the bacterial ribosomal protein bL12 family. As to quaternary structure, homodimer. Part of the ribosomal stalk of the 50S ribosomal subunit. Forms a multimeric L10(L12)X complex, where L10 forms an elongated spine to which 2 to 4 L12 dimers bind in a sequential fashion. Binds GTP-bound translation factors.

In terms of biological role, forms part of the ribosomal stalk which helps the ribosome interact with GTP-bound translation factors. Is thus essential for accurate translation. This Yersinia enterocolitica serotype O:8 / biotype 1B (strain NCTC 13174 / 8081) protein is Large ribosomal subunit protein bL12.